We begin with the raw amino-acid sequence, 1391 residues long: DNA-directed RNA polymerase subunit beta' (1391 aa).

Zn(2+)-binding residues include Cys72, Cys74, Cys87, and Cys90. Positions 462, 464, and 466 each coordinate Mg(2+). Zn(2+)-binding residues include Cys816, Cys890, Cys897, and Cys900.

The protein belongs to the RNA polymerase beta' chain family. As to quaternary structure, the RNAP catalytic core consists of 2 alpha, 1 beta, 1 beta' and 1 omega subunit. When a sigma factor is associated with the core the holoenzyme is formed, which can initiate transcription. It depends on Mg(2+) as a cofactor. Zn(2+) serves as cofactor.

It catalyses the reaction RNA(n) + a ribonucleoside 5'-triphosphate = RNA(n+1) + diphosphate. Functionally, DNA-dependent RNA polymerase catalyzes the transcription of DNA into RNA using the four ribonucleoside triphosphates as substrates. This Neisseria gonorrhoeae (strain NCCP11945) protein is DNA-directed RNA polymerase subunit beta'.